The following is a 197-amino-acid chain: ATP synthase protein MI25 (197 aa).

The chain crosses the membrane as a helical span at residues Ile-30 to Ser-50.

It belongs to the ATPase protein MI25 family. In terms of assembly, F-type ATPases have 2 components, CF(1) - the catalytic core - and CF(0) - the membrane proton channel. CF(1) has five subunits: alpha(3), beta(3), gamma(1), delta(1), epsilon(1). CF(0) has three main subunits: a, b and c.

Its subcellular location is the mitochondrion membrane. In terms of biological role, this is one of the chains of the nonenzymatic component (CF(0) subunit) of the mitochondrial ATPase complex. In Oryza sativa subsp. indica (Rice), this protein is ATP synthase protein MI25.